The chain runs to 2298 residues: Non-reducing polyketide synthase pgmA (2298 aa).

An N-terminal acylcarrier protein transacylase domain (SAT) region spans residues 8–333; it reads LFIFGDQTLD…IYNVLKQSPL (326 aa). Residues 336 to 361 form a disordered region; the sequence is YLSSKPAQSRQPVSNEGAPEPGNGRQ. The span at 340-349 shows a compositional bias: polar residues; the sequence is KPAQSRQPVS. One can recognise a Ketosynthase family 3 (KS3) domain in the interval 360 to 798; sequence RQKLAIIGMS…GGNSALLVED (439 aa). Catalysis depends on for beta-ketoacyl synthase activity residues Cys532, His667, and His714. The segment at 901 to 1193 is acyl/malonyl transferases; sequence VFAFTGQGAH…GMVKGVLGPQ (293 aa). Ser994 functions as the For acyl/malonyl transferase activity in the catalytic mechanism. Positions 1283-1415 are N-terminal hotdog fold; it reads HRVVEETHDS…CVVRFRDRGL (133 aa). A PKS/mFAS DH domain is found at 1283 to 1589; that stretch reads HRVVEETHDS…IQGVPRRVLK (307 aa). The tract at residues 1294–1586 is product template (PT) domainn; sequence KTRIVIEADI…QISIQGVPRR (293 aa). His1315 serves as the catalytic Proton acceptor; for dehydratase activity. The tract at residues 1438–1589 is C-terminal hotdog fold; sequence VTGETARFNR…IQGVPRRVLK (152 aa). The active-site Proton donor; for dehydratase activity is the Asp1502. The segment at 1619–1642 is disordered; the sequence is YPVANGHAQATPTSGPVNGEPRPS. In terms of domain architecture, Carrier 1 spans 1641-1716; that stretch reads PSRFPRALEI…SLRALLSEPE (76 aa). Ser1675 carries the post-translational modification O-(pantetheine 4'-phosphoryl)serine. The tract at residues 1716 to 1762 is disordered; that stretch reads ERSTNGMPAASAKDTSRFDEIPPMNGHKTNGHVMNGHSNGSSNGLPD. Polar residues predominate over residues 1751–1760; that stretch reads GHSNGSSNGL. In terms of domain architecture, Carrier 2 spans 1765–1840; sequence KVDFQRVLQI…DLKRYLFPQD (76 aa). Position 1799 is an O-(pantetheine 4'-phosphoryl)serine (Ser1799). A reductase (R) domain region spans residues 1927 to 2178; the sequence is VTGASGSLGG…YWTPVEEVAG (252 aa).

It functions in the pathway pigment biosynthesis. Its pathway is secondary metabolite biosynthesis. In terms of biological role, non-reducing polyketide synthase; part of the gene cluster that mediates the biosynthesis of pleosporalin A, ascomycone A, as well as a third cryptic naphthoquinone derived pigment, all responsible for the coloration of conidia. The non-reducing polyketide synthase pgmA is responsible for the condensation of seven acetyl-CoA units to produce the cyclized heptaketide 3-acetonyl-1,6,8-trihydroxy-2-naphthaldehyde. The pathway begins with the biosynthesis of the cyclized heptaketide 3-acetonyl-1,6,8-trihydroxy-2-naphthaldehyde by the NR-PKS pgmA. The C-6 hydroxyl group is further methylated by the O-methyltransferase pgmB to yield fusarubinaldehyde which is in turn oxidized by the cytochrome P450 monooxygenase pgmC at C-9. The C-1 hydroxyl group is then methylated spontaneously. Although pgmE, pgmD and pgmH are essential for the production of pleosporalin A, it is not the case for the 2 other final products and it remains difficult to assign a specific function to each enzyme. PgmF and pgmG seem not to be involved in pigment biosynthesis although they were regulated by the cluster-specific transcription factor pgmR. The chain is Non-reducing polyketide synthase pgmA from Aspergillus terreus (strain NIH 2624 / FGSC A1156).